The sequence spans 710 residues: U3 small nucleolar RNA-associated protein 4 (710 aa).

WD repeat units lie at residues 11 to 59 (YTPS…CLKT), 64 to 105 (GVDR…PLVN), 108 to 147 (SNAG…GVIE), 154 to 192 (RQTS…SAII), 199 to 241 (RARK…LSQS), 290 to 327 (FHSH…RQFN), 328 to 365 (RKNH…LWRI), 488 to 527 (SMCD…YSEL), and 529 to 569 (RVNT…LSEW).

As to quaternary structure, component of the ribosomal small subunit (SSU) processome.

The protein resides in the nucleus. It is found in the nucleolus. Involved in nucleolar processing of pre-18S ribosomal RNA. Required for optimal pre-ribosomal RNA transcription by RNA polymerase I together with a subset of U3 proteins required for transcription (t-UTPs). In Schizosaccharomyces pombe (strain 972 / ATCC 24843) (Fission yeast), this protein is U3 small nucleolar RNA-associated protein 4 (utp4).